Consider the following 552-residue polypeptide: Pyrophosphate--fructose 6-phosphate 1-phosphotransferase subunit beta (552 aa).

G90 is a binding site for diphosphate. Residue D184 participates in Mg(2+) binding. Substrate-binding positions include 212–214 (TID), 251–252 (KY), 259–261 (MGR), E320, and 425–428 (YEGR). D214 serves as the catalytic Proton acceptor.

This sequence belongs to the phosphofructokinase type A (PFKA) family. PPi-dependent PFK group II subfamily. Clade 'Long' sub-subfamily. Tetramer of two alpha (regulatory) and two beta (catalytic) chains. Requires Mg(2+) as cofactor.

Its subcellular location is the cytoplasm. It catalyses the reaction beta-D-fructose 6-phosphate + diphosphate = beta-D-fructose 1,6-bisphosphate + phosphate + H(+). It participates in carbohydrate degradation; glycolysis; D-glyceraldehyde 3-phosphate and glycerone phosphate from D-glucose: step 3/4. Its activity is regulated as follows. Allosterically activated by fructose 2,6-bisphosphate. Its function is as follows. Catalytic subunit of pyrophosphate--fructose 6-phosphate 1-phosphotransferase. Catalyzes the phosphorylation of D-fructose 6-phosphate, the first committing step of glycolysis. Uses inorganic phosphate (PPi) as phosphoryl donor instead of ATP like common ATP-dependent phosphofructokinases (ATP-PFKs), which renders the reaction reversible, and can thus function both in glycolysis and gluconeogenesis. This Ricinus communis (Castor bean) protein is Pyrophosphate--fructose 6-phosphate 1-phosphotransferase subunit beta.